The primary structure comprises 496 residues: Probable malate:quinone oxidoreductase (496 aa).

This sequence belongs to the MQO family. The cofactor is FAD.

The enzyme catalyses (S)-malate + a quinone = a quinol + oxaloacetate. It participates in carbohydrate metabolism; tricarboxylic acid cycle; oxaloacetate from (S)-malate (quinone route): step 1/1. The chain is Probable malate:quinone oxidoreductase from Prochlorococcus marinus (strain MIT 9303).